A 501-amino-acid polypeptide reads, in one-letter code: Cytochrome P450 2J6 (501 aa).

Cys-447 is a binding site for heme.

The protein belongs to the cytochrome P450 family. The cofactor is heme.

Its subcellular location is the endoplasmic reticulum membrane. It localises to the microsome membrane. It carries out the reaction an organic molecule + reduced [NADPH--hemoprotein reductase] + O2 = an alcohol + oxidized [NADPH--hemoprotein reductase] + H2O + H(+). In Mus musculus (Mouse), this protein is Cytochrome P450 2J6 (Cyp2j6).